A 56-amino-acid chain; its full sequence is Large ribosomal subunit protein bL33 (56 aa).

It belongs to the bacterial ribosomal protein bL33 family.

The polypeptide is Large ribosomal subunit protein bL33 (Dichelobacter nodosus (strain VCS1703A)).